The chain runs to 258 residues: Archaerhodopsin-3 (258 aa).

Residues 1–6 constitute a propeptide that is removed on maturation; that stretch reads MDPIAL. The residue at position 7 (Q7) is a Pyrrolidone carboxylic acid. Residues 7–18 lie on the Extracellular side of the membrane; sequence QAGYDLLGDGRP. The helical transmembrane segment at 19–40 threads the bilayer; sequence ETLWLGIGTLLMLIGTFYFLVR. Residues 41–49 are Cytoplasmic-facing; sequence GWGVTDKDA. Residues 50 to 71 traverse the membrane as a helical segment; the sequence is REYYAVTILVPGIASAAYLSMF. Residues 72 to 89 lie on the Extracellular side of the membrane; sequence FGIGLTEVTVGGEMLDIY. The helical transmembrane segment at 90–111 threads the bilayer; it reads YARYADWLFTTPLLLLDLALLA. The Cytoplasmic segment spans residues 112-114; sequence KVD. The chain crosses the membrane as a helical span at residues 115-137; sequence RVTIGTLVGVDALMIVTGLIGAL. Over 138 to 141 the chain is Extracellular; it reads SHTA. Residues 142 to 170 form a helical membrane-spanning segment; it reads IARYSWWLFSTICMIVVLYFLATSLRSAA. At 171–173 the chain is on the cytoplasmic side; sequence KER. Residues 174-202 traverse the membrane as a helical segment; the sequence is GPEVASTFNTLTALVLVLWTAYPILWIIG. Over 203-210 the chain is Extracellular; the sequence is TEGAGVVG. A helical membrane pass occupies residues 211–243; it reads LGIETLLFMVLDVTAKVGFGFILLRSRAILGDT. K226 carries the N6-(retinylidene)lysine modification. Residues 244–258 are Cytoplasmic-facing; it reads EAPEPSAGADVSAAD.

Belongs to the archaeal/bacterial/fungal opsin family.

It is found in the cell membrane. In terms of biological role, light-driven proton pump. This is Archaerhodopsin-3 (aop3) from Halorubrum sodomense.